The sequence spans 298 residues: Bifunctional protein FolD (298 aa).

NADP(+) contacts are provided by residues 165 to 167 (GRS), Ser-190, and Ile-231.

Belongs to the tetrahydrofolate dehydrogenase/cyclohydrolase family. Homodimer.

The enzyme catalyses (6R)-5,10-methylene-5,6,7,8-tetrahydrofolate + NADP(+) = (6R)-5,10-methenyltetrahydrofolate + NADPH. It catalyses the reaction (6R)-5,10-methenyltetrahydrofolate + H2O = (6R)-10-formyltetrahydrofolate + H(+). Its pathway is one-carbon metabolism; tetrahydrofolate interconversion. Catalyzes the oxidation of 5,10-methylenetetrahydrofolate to 5,10-methenyltetrahydrofolate and then the hydrolysis of 5,10-methenyltetrahydrofolate to 10-formyltetrahydrofolate. The protein is Bifunctional protein FolD of Prochlorococcus marinus (strain MIT 9515).